Here is a 263-residue protein sequence, read N- to C-terminus: Diphthine synthase (263 aa).

S-adenosyl-L-methionine contacts are provided by residues leucine 9, aspartate 84, methionine 87, serine 112–isoleucine 113, leucine 164, alanine 207, and histidine 232.

The protein belongs to the diphthine synthase family. As to quaternary structure, homodimer.

It catalyses the reaction 2-[(3S)-amino-3-carboxypropyl]-L-histidyl-[translation elongation factor 2] + 3 S-adenosyl-L-methionine = diphthine-[translation elongation factor 2] + 3 S-adenosyl-L-homocysteine + 3 H(+). It participates in protein modification; peptidyl-diphthamide biosynthesis. Functionally, S-adenosyl-L-methionine-dependent methyltransferase that catalyzes the trimethylation of the amino group of the modified target histidine residue in translation elongation factor 2 (EF-2), to form an intermediate called diphthine. The three successive methylation reactions represent the second step of diphthamide biosynthesis. This Methanosphaera stadtmanae (strain ATCC 43021 / DSM 3091 / JCM 11832 / MCB-3) protein is Diphthine synthase.